Consider the following 455-residue polypeptide: Glutamyl-tRNA(Gln) amidotransferase subunit A (455 aa).

Catalysis depends on charge relay system residues lysine 74 and serine 149. Serine 173 (acyl-ester intermediate) is an active-site residue.

This sequence belongs to the amidase family. GatA subfamily. In terms of assembly, heterotrimer of A, B and C subunits.

It carries out the reaction L-glutamyl-tRNA(Gln) + L-glutamine + ATP + H2O = L-glutaminyl-tRNA(Gln) + L-glutamate + ADP + phosphate + H(+). Allows the formation of correctly charged Gln-tRNA(Gln) through the transamidation of misacylated Glu-tRNA(Gln) in organisms which lack glutaminyl-tRNA synthetase. The reaction takes place in the presence of glutamine and ATP through an activated gamma-phospho-Glu-tRNA(Gln). This is Glutamyl-tRNA(Gln) amidotransferase subunit A from Methanosphaera stadtmanae (strain ATCC 43021 / DSM 3091 / JCM 11832 / MCB-3).